The chain runs to 99 residues: Imizoquin biosynthesis cluster protein A (99 aa).

The protein operates within secondary metabolite biosynthesis. Functionally, part of the gene cluster that mediates the biosynthesis of imizoquins A to D, tripeptide-derived alkaloids that serve a protective role against oxidative stress that are essential for normal germination. ImqB is a canonical three-module NRPS that assembles the tripeptide backbone of the imizoquins via condensation of Trp, Tyr, and Leu-derived precursors. N-methylation by imqF and phenol oxidation by imqC, followed by cyclization via the FAD-dependent oxidase imqH carry out the three-step transformation of L-tyrosine into tetrahydroisoquinoline. Importantly, this sequence requires the presence of a free amine in the tyrosine moiety, indicating that isoquinoline formation occurs prior to peptide bond formation. The imidazolidin-4-one ring of imizoquins could form following additional oxidation of the methyl-derived bridgehead carbon by imqH. Lastly, O-methylation by imqG and leucine hydroxylation by imqE complete biosynthesis of the imizoquins. The chain is Imizoquin biosynthesis cluster protein A from Aspergillus flavus (strain ATCC 200026 / FGSC A1120 / IAM 13836 / NRRL 3357 / JCM 12722 / SRRC 167).